The following is a 487-amino-acid chain: Keratin, type I cytoskeletal 12 (487 aa).

The segment at 1 to 118 (MSLSVCTSAL…GNDGGLLSGS (118 aa)) is head. The coil 1A stretch occupies residues 119-154 (EKETMQNLNDRLASYLGKVRSLEEANAELENKIREW). The IF rod domain maps to 119–433 (EKETMQNLND…RLLEGDSQGD (315 aa)). The interval 158 to 175 (RRTRDAGSQSDYSKYYPL) is linker 1. Residues 176-267 (IEDLKNKIVS…KNHEEELQSF (92 aa)) form a coil 1B region. Positions 268–290 (QAGGPGEVNVEMDAAPGVDLTKV) are linker 12. A coil 2 region spans residues 291 to 428 (LNEMRAQYEA…IETYRRLLEG (138 aa)). The tract at residues 428 to 461 (GDSQGDGFDESSSLSVSKPQTPSVDSSKDPNKTR) is disordered. The tail stretch occupies residues 429–487 (DSQGDGFDESSSLSVSKPQTPSVDSSKDPNKTRKIKTVVQEIVNGEVVSSQVQELEEEM). Residues 437-452 (ESSSLSVSKPQTPSVD) show a composition bias toward polar residues.

Belongs to the intermediate filament family. As to quaternary structure, heterotetramer of two type I and two type II keratins. Keratin-3 associates with keratin-12. In terms of tissue distribution, expressed in the corneal epithelium (at protein level). Also expressed in the suprabasal limbal epithelium of the cornea (at protein level).

Involved in corneal epithelium organization, integrity and corneal keratin expression. This chain is Keratin, type I cytoskeletal 12 (Krt12), found in Mus musculus (Mouse).